The sequence spans 457 residues: Adenylosuccinate synthetase isozyme 1 (457 aa).

A disordered region spans residues M1–Q24. Residues G42–K48 and G70–T72 contribute to the GTP site. D43 functions as the Proton acceptor in the catalytic mechanism. Residues D43 and G70 each coordinate Mg(2+). D43 contributes to the substrate binding site. IMP is bound by residues D43 to K46, N68 to H71, T163, R177, N256, T271, and R335. The active-site Proton donor is the H71. V331 to R337 is a binding site for substrate. GTP contacts are provided by residues R337, K363–D365, and G445–K448.

This sequence belongs to the adenylosuccinate synthetase family. Homodimer. Requires Mg(2+) as cofactor. In terms of tissue distribution, high levels in muscle.

The protein resides in the cytoplasm. It is found in the membrane. It catalyses the reaction IMP + L-aspartate + GTP = N(6)-(1,2-dicarboxyethyl)-AMP + GDP + phosphate + 2 H(+). It participates in purine metabolism; AMP biosynthesis via de novo pathway; AMP from IMP: step 1/2. Its activity is regulated as follows. Weakly inhibited by AMP non-competitively to all substrates. Inhibited by IMP non-competitively with respect to GTP. Inhibited by fructose 1,6-bisphosphate competitively with respect to IMP. Component of the purine nucleotide cycle (PNC), which interconverts IMP and AMP to regulate the nucleotide levels in various tissues, and which contributes to glycolysis and ammoniagenesis. Catalyzes the first committed step in the biosynthesis of AMP from IMP. The chain is Adenylosuccinate synthetase isozyme 1 (Adss1) from Mus musculus (Mouse).